The primary structure comprises 227 residues: Ribonuclease 3 (227 aa).

The 123-residue stretch at 5 to 127 (LNALQLRLQH…LIGAVYLDAG (123 aa)) folds into the RNase III domain. Glu-40 is a Mg(2+) binding site. Asp-44 is a catalytic residue. Positions 113 and 116 each coordinate Mg(2+). Residue Glu-116 is part of the active site. Residues 154 to 224 (DAKTALQEWL…ATAMLELLKA (71 aa)) enclose the DRBM domain.

Belongs to the ribonuclease III family. Homodimer. Mg(2+) serves as cofactor.

The protein localises to the cytoplasm. The enzyme catalyses Endonucleolytic cleavage to 5'-phosphomonoester.. Functionally, digests double-stranded RNA. Involved in the processing of primary rRNA transcript to yield the immediate precursors to the large and small rRNAs (23S and 16S). Processes some mRNAs, and tRNAs when they are encoded in the rRNA operon. Processes pre-crRNA and tracrRNA of type II CRISPR loci if present in the organism. The protein is Ribonuclease 3 of Delftia acidovorans (strain DSM 14801 / SPH-1).